Consider the following 546-residue polypeptide: Phosphatidylinositol 4-phosphate 5-kinase type-1 alpha (546 aa).

A PIPK domain is found at 65 to 433 (TSSALKGAIQ…RFQRFMCNTV (369 aa)). K87 participates in a covalent cross-link: Glycyl lysine isopeptide (Lys-Gly) (interchain with G-Cter in ubiquitin). Residues 441 to 522 (PSPTKKFRSG…PGPSFSPAVG (82 aa)) are disordered. A compositionally biased stretch (low complexity) spans 449–461 (SGPSFSRRSGPSG). A compositionally biased stretch (polar residues) spans 462 to 471 (NSCTPSQPTA). Over residues 473-493 (GEHKAQVTTKAEVEPDIHLGR) the composition is skewed to basic and acidic residues.

Interacts with RAC1. Interacts with TUT1. Forms a complex with CDH1/E-cadherin, CTNNB1/beta-catenin and CTNND1 at the plasma membrane upon calcium stimulation. Found in a ternary complex with IRS1 and DGKZ in the absence of insulin stimulation. Interacts with DGKZ. Interacts with PIP4K2C; the interaction inhibits PIP5K1A kinase activity.

The protein localises to the cell membrane. It is found in the cytoplasm. It localises to the nucleus. Its subcellular location is the nucleus speckle. The protein resides in the cell projection. The protein localises to the ruffle. It is found in the lamellipodium. It catalyses the reaction a 1,2-diacyl-sn-glycero-3-phospho-(1D-myo-inositol 4-phosphate) + ATP = a 1,2-diacyl-sn-glycero-3-phospho-(1D-myo-inositol-4,5-bisphosphate) + ADP + H(+). It carries out the reaction 1-octadecanoyl-2-(5Z,8Z,11Z,14Z)-eicosatetraenoyl-sn-glycero-3-phospho-1D-myo-inositol 4-phosphate + ATP = 1-octadecanoyl-2-(5Z,8Z,11Z,14Z)-eicosatetraenoyl-sn-glycero-3-phospho-1D-myo-inositol 4,5-bisphosphate + ADP + H(+). The catalysed reaction is 1,2-dihexadecanoyl-sn-glycero-3-phospho-(1D-myo-inositol-4-phosphate) + ATP = 1,2-dihexadecanoyl-sn-glycero-3-phospho-(1D-myo-inositol-4,5-bisphosphate) + ADP + H(+). The enzyme catalyses 1-octadecanoyl-2-(9Z)-octadecenoyl-sn-glycero-3-phospho-1D-myo-inositol 4-phosphate + ATP = 1-octadecanoyl-2-(9Z)-octadecenoyl-sn-glycero-3-phospho-1D-myo-inositol 4,5-bisphosphate + ADP + H(+). It catalyses the reaction 1-octadecanoyl-2-(9Z)-octadecenoyl-sn-glycero-3-phospho-1D-myo-inositol + ATP = 1-octadecanoyl-2-(9Z)-octadecenoyl-sn-glycero-3-phospho-1D-myo-inositol 5-phosphate + ADP + H(+). It carries out the reaction 1-octadecanoyl-2-(9Z,12Z)-octadecadienoyl-sn-glycero-3-phospho-1D-myo-inositol + ATP = 1-octadecanoyl-2-(9Z,12Z)-octadecadienoyl-sn-glycero-3-phospho-1D-myo-inositol 5-phosphate + ADP + H(+). The catalysed reaction is 1-octadecanoyl-2-(5Z,8Z,11Z,14Z-eicosatetraenoyl)-sn-glycero-3-phospho-(1D-myo-inositol) + ATP = 1-octadecanoyl-2-(5Z,8Z,11Z,14Z)-eicosatetraenoyl-sn-glycero-3-phospho-1D-myo-inositol 5-phosphate + ADP + H(+). The enzyme catalyses 1,2-di-(9Z,12Z)-octadecadienoyl-sn-glycero-3-phospho-1D-myo-inositol + ATP = 1,2-di(9Z,12Z)-octadecadienoyl-sn-glycero-3-phospho-1D-myo-inositol 5-phosphate + ADP + H(+). Functionally, catalyzes the phosphorylation of phosphatidylinositol 4-phosphate (PtdIns(4)P/PI4P) to form phosphatidylinositol 4,5-bisphosphate (PtdIns(4,5)P2/PIP2), a lipid second messenger that regulates several cellular processes such as signal transduction, vesicle trafficking, actin cytoskeleton dynamics, cell adhesion, and cell motility. PtdIns(4,5)P2 can directly act as a second messenger or can be utilized as a precursor to generate other second messengers: inositol 1,4,5-trisphosphate (IP3), diacylglycerol (DAG) or phosphatidylinositol-3,4,5-trisphosphate (PtdIns(3,4,5)P3/PIP3). PIP5K1A-mediated phosphorylation of PtdIns(4)P is the predominant pathway for PtdIns(4,5)P2 synthesis. Can also use phosphatidylinositol (PtdIns) as substrate in vitro. Together with PIP5K1C, is required for phagocytosis, both enzymes regulating different types of actin remodeling at sequential steps. Promotes particle ingestion by activating the WAS GTPase-binding protein that induces Arp2/3 dependent actin polymerization at the nascent phagocytic cup. Together with PIP5K1B, is required, after stimulation by G-protein coupled receptors, for the synthesis of IP3 that will induce stable platelet adhesion. Recruited to the plasma membrane by the E-cadherin/beta-catenin complex where it provides the substrate PtdIns(4,5)P2 for the production of PtdIns(3,4,5)P3, IP3 and DAG, that will mobilize internal calcium and drive keratinocyte differentiation. Positively regulates insulin-induced translocation of SLC2A4 to the cell membrane in adipocytes. Together with PIP5K1C has a role during embryogenesis. Independently of its catalytic activity, is required for membrane ruffling formation, actin organization and focal adhesion formation during directional cell migration by controlling integrin-induced translocation of the small GTPase RAC1 to the plasma membrane. Also functions in the nucleus where it acts as an activator of TUT1 adenylyltransferase activity in nuclear speckles, thereby regulating mRNA polyadenylation of a select set of mRNAs. The sequence is that of Phosphatidylinositol 4-phosphate 5-kinase type-1 alpha from Rattus norvegicus (Rat).